The primary structure comprises 129 residues: UPF0102 protein Ctha_1382 (129 aa).

The protein belongs to the UPF0102 family.

This is UPF0102 protein Ctha_1382 from Chloroherpeton thalassium (strain ATCC 35110 / GB-78).